Consider the following 221-residue polypeptide: Putative N-acetylmannosamine-6-phosphate 2-epimerase (221 aa).

This sequence belongs to the NanE family.

The enzyme catalyses an N-acyl-D-glucosamine 6-phosphate = an N-acyl-D-mannosamine 6-phosphate. It participates in amino-sugar metabolism; N-acetylneuraminate degradation; D-fructose 6-phosphate from N-acetylneuraminate: step 3/5. In terms of biological role, converts N-acetylmannosamine-6-phosphate (ManNAc-6-P) to N-acetylglucosamine-6-phosphate (GlcNAc-6-P). The sequence is that of Putative N-acetylmannosamine-6-phosphate 2-epimerase from Clostridium perfringens (strain ATCC 13124 / DSM 756 / JCM 1290 / NCIMB 6125 / NCTC 8237 / Type A).